Here is a 95-residue protein sequence, read N- to C-terminus: Co-chaperonin GroES (95 aa).

It belongs to the GroES chaperonin family. As to quaternary structure, heptamer of 7 subunits arranged in a ring. Interacts with the chaperonin GroEL.

The protein localises to the cytoplasm. Functionally, together with the chaperonin GroEL, plays an essential role in assisting protein folding. The GroEL-GroES system forms a nano-cage that allows encapsulation of the non-native substrate proteins and provides a physical environment optimized to promote and accelerate protein folding. GroES binds to the apical surface of the GroEL ring, thereby capping the opening of the GroEL channel. In Stenotrophomonas maltophilia (strain R551-3), this protein is Co-chaperonin GroES.